Reading from the N-terminus, the 425-residue chain is Dihydroorotase (425 aa).

The Zn(2+) site is built by H61 and H63. Residues 63–65 (HLR) and N95 each bind substrate. The Zn(2+) site is built by D153, H180, and H233. A substrate-binding site is contributed by N279. D306 provides a ligand contact to Zn(2+). D306 is an active-site residue. Substrate is bound at residue H310.

The protein belongs to the metallo-dependent hydrolases superfamily. DHOase family. Class I DHOase subfamily. Zn(2+) is required as a cofactor.

The enzyme catalyses (S)-dihydroorotate + H2O = N-carbamoyl-L-aspartate + H(+). It participates in pyrimidine metabolism; UMP biosynthesis via de novo pathway; (S)-dihydroorotate from bicarbonate: step 3/3. Catalyzes the reversible cyclization of carbamoyl aspartate to dihydroorotate. This chain is Dihydroorotase, found in Geotalea daltonii (strain DSM 22248 / JCM 15807 / FRC-32) (Geobacter daltonii).